The following is a 610-amino-acid chain: UvrABC system protein C (610 aa).

One can recognise a GIY-YIG domain in the interval 16–94 (SQPGVYRMYD…IKLYQPRYNV (79 aa)). One can recognise a UVR domain in the interval 204–239 (QQVLNQLISRMESASRDLRFEDAARIRDQIQAVRRV).

Belongs to the UvrC family. As to quaternary structure, interacts with UvrB in an incision complex.

Its subcellular location is the cytoplasm. The UvrABC repair system catalyzes the recognition and processing of DNA lesions. UvrC both incises the 5' and 3' sides of the lesion. The N-terminal half is responsible for the 3' incision and the C-terminal half is responsible for the 5' incision. The protein is UvrABC system protein C of Pectobacterium atrosepticum (strain SCRI 1043 / ATCC BAA-672) (Erwinia carotovora subsp. atroseptica).